A 654-amino-acid chain; its full sequence is Protein fem-1 homolog A (654 aa).

ANK repeat units follow at residues 2 to 31, 40 to 70, 82 to 111, 115 to 145, 149 to 178, 182 to 211, and 214 to 243; these read DLHTAVYNAAHDGKLLLLQKLLAGRGREEI, GGGTPLLIAARRGHLDVVEYLVDNCGASVEA, EGAPPLWAASAAGHLAVVRSLLRRGASVNR, TNSTPLRAACFDGHLDVVRYLVGEHKADLEV, HGHTCLMISCYKGHREIARYLLERGAQVNR, KGNTALHDCAESGSLEILQLLLGCHARMER, and YGMTPLLAASVTGHTNIVEYLIQEQPGHGQ. Position 108 is a phosphoserine (S108). The disordered stretch occupies residues 241-265; the sequence is HGQLSGTELPGEGSSQMAGNHCSTP. The segment covering 253–263 has biased composition (polar residues); that stretch reads GSSQMAGNHCS. 2 TPR repeats span residues 283–317 and 375–408; these read VEALELLGATYVDKKRDLLGALKHWRRAMELRHQG and SYYIRYRGAVYADSGNFERCIRLWKYALDMQQNN. ANK repeat units lie at residues 519-561 and 565-594; these read NGFT…DPDS and DNNTPLHVAAQNNCPAIMDALIEAGAHMDA. S608 bears the Phosphoserine mark.

The protein belongs to the fem-1 family. As to quaternary structure, component of a CRL2 E3 ubiquitin-protein ligase complex, also named ECS (Elongin BC-CUL2/5-SOCS-box protein) complex, composed of CUL2, Elongin BC (ELOB and ELOC), RBX1 and substrate-specific adapter FEM1A. Interacts with PTGER4. Interacts with NFKB1; the interaction is direct. Phosphorylated; highly phosphorylated in myoblasts and myotubes. Phosphorylation at Ser-108 and Ser-608 promote PGE2-EP4-mediated inhibition of inflammation. Dephosphorylated by protein phosphatase 2A (PP2A).

It is found in the mitochondrion. It localises to the cytoplasm. Its pathway is protein modification; protein ubiquitination. Functionally, substrate-recognition component of a Cul2-RING (CRL2) E3 ubiquitin-protein ligase complex of the DesCEND (destruction via C-end degrons) pathway, which recognizes a C-degron located at the extreme C terminus of target proteins, leading to their ubiquitination and degradation. The C-degron recognized by the DesCEND pathway is usually a motif of less than ten residues and can be present in full-length proteins, truncated proteins or proteolytically cleaved forms. The CRL2(FEM1A) complex specifically recognizes proteins with an arginine at the C-terminus: recognizes and binds proteins ending with -Lys/Arg-Xaa-Arg and -Lys/Arg-Xaa-Xaa-Arg C-degrons, such as SIL1 or OR51B2, leading to their ubiquitination and degradation. Involved in PGE2-EP4-mediated inhibition of inflammation of macrophages via interaction with NFKB1 and PTGER4. Promotes inflammation in brain microglia through MAP2K4/MKK4-mediated signaling. The sequence is that of Protein fem-1 homolog A from Rattus norvegicus (Rat).